The following is a 273-amino-acid chain: MDFLIVLKALMMGLVEGFTEFLPISSTGHLIVFGNLIGFHSNHKVFEIAIQLGAVLAVVFEYRQRFSNVLHGVGKDRKANRFVLNLAIAFIPAAVMGLLFGKQIKEHLFNPLSVAVMLVLGGLFILWVEKRQSWAEPKIADVDALRPIDALMIGVAQVFALIPGTSRSGSTIMGGMLWGIERKTATEFSFFLAVPMMVAATAYDVLKHYRFFTLHDVGLILIGFVAAFVSGLVAVKALLRFVSKKNYIPFAYYRIVFGIAIIILWLSGWISWE.

Transmembrane regions (helical) follow at residues 13–35, 45–62, 82–102, 108–128, 144–164, 186–206, 219–239, and 250–270; these read GLVE…VFGN, VFEI…VFEY, FVLN…LFGK, LFNP…ILWV, ALRP…LIPG, TEFS…YDVL, LILI…KALL, and FAYY…SGWI.

Belongs to the UppP family.

It is found in the cell inner membrane. The enzyme catalyses di-trans,octa-cis-undecaprenyl diphosphate + H2O = di-trans,octa-cis-undecaprenyl phosphate + phosphate + H(+). Its function is as follows. Catalyzes the dephosphorylation of undecaprenyl diphosphate (UPP). Confers resistance to bacitracin. The protein is Undecaprenyl-diphosphatase of Neisseria meningitidis serogroup C (strain 053442).